Here is a 1827-residue protein sequence, read N- to C-terminus: MTSLAERAAQLSPNARAALARELVRAGTTFPTDICEPVAVVGIGCRFPGNVTGPESFWQLLADGVDTIEQVPPDRWDADAFYDPDPSASGRMTTKWGGFVSDVDAFDADFFGITPREAVAMDPQHRILLEVAWEALEHAGIPPDSLSGTRTGVMMGLSSWDYTIVNIERRADIDAYLSTGTPHCAAVGRIAYLLGLRGPAVAVDTACSSSLVAIHLACQSLRLRETDVALAGGVQLTLSPFTAIALSKWSALSPTGRCNSFDANADGFVRGEGCGVVVLKRLADAVRDQDRVLAVVRGSATNSDGRSNGMTAPNALAQRDVITSALKLADVTPDSVNYVETHGTGTVLGDPIEFESLAATYGLGKGQGESPCALGSVKTNIGHLEAAAGVAGFIKAVLAVQRGHIPRNLHFTRWNPAIDASATRLFVPTESAPWPAAAGPRRAAVSSFGLSGTNAHVVVEQAPDTAVAAAGGMPYVSALNVSGKTAARVASAAAVLADWMSGPGAAAPLADVAHTLNRHRARHAKFATVIARDRAEAIAGLRALAAGQPRVGVVDCDQHAGGPGRVFVYSGQGSQWASMGQQLLANEPAFAKAVAELDPIFVDQVGFSLQQTLIDGDEVVGIDRIQPVLVGMQLALTELWRSYGVIPDAVIGHSMGEVSAAVVAGALTPEQGLRVITTRSRLMARLSGQGAMALLELDADAAEALIAGYPQVTLAVHASPRQTVIAGPPEQVDTVIAAVATQNRLARRVEVDVASHHPIIDPILPELRSALADLTPQPPSIPIISTTYESAQPVADADYWSANLRNPVRFHQAVTAAGVDHNTFIEISPHPVLTHALTDTLDPDGSHTVMSTMNRELDQTLYFHAQLAAVGVAASEHTTGRLVDLPPTPWHHQRFWVTDRSAMSELAATHPLLGAHIEMPRNGDHVWQTDVGTEVCPWLADHKVFGQPIMPAAGFAEIALAAASEALGTAADAVAPNIVINQFEVEQMLPLDGHTPLTTQLIRGGDSQIRVEIYSRTRGGEFCRHATAKVEQSPRECAHAHPEAQGPATGTTVSPADFYALLRQTGQHHGPAFAALSRIVRLADGSAETEISIPDEAPRHPGYRLHPVVLDAALQSVGAAIPDGEIAGSAEASYLPVSFETIRVYRDIGRHVRCRAHLTNLDGGTGKMGRIVLINDAGHIAAEVDGIYLRRVERRAVPLPLEQKIFDAEWTESPIAAVPAPEPAAETTRGSWLVLADATVDAPGKAQAKSMADDFVQQWRSPMRRVHTADIHDESAVLAAFAETAGDPEHPPVGVVVFVGGASSRLDDELAAARDTVWSITTVVRAVVGTWHGRSPRLWLVTGGGLSVADDEPGTPAAASLKGLVRVLAFEHPDMRTTLVDLDITQDPLTALSAELRNAGSGSRHDDVIAWRGERRFVERLSRATIDVSKGHPVVRQGASYVVTGGLGGLGLVVARWLVDRGAGRVVLGGRSDPTDEQCNVLAELQTRAEIVVVRGDVASPGVAEKLIETARQSGGQLRGVVHAAAVIEDSLVFSMSRDNLERVWAPKATGALRMHEATADCELDWWLGFSSAASLLGSPGQAAYACASAWLDALVGWRRASGLPAAVINWGPWSEVGVAQALVGSVLDTISVAEGIEALDSLLAADRIRTGVARLRADRALVAFPEIRSISYFTQVVEELDSAGDLGDWGGPDALADLDPGEARRAVTERMCARIAAVMGYTDQSTVEPAVPLDKPLTELGLDSLMAVRIRNGARADFGVEPPVALILQGASLHDLTADLMRQLGLNDPDPALNNADTIRDRARQRAAARHGAAMRRRPKPAVQGG.

A Ketosynthase family 3 (KS3) domain is found at 35–461 (CEPVAVVGIG…GTNAHVVVEQ (427 aa)). Active-site for beta-ketoacyl synthase activity residues include cysteine 207, histidine 342, and histidine 383. Residues 566-876 (VFVYSGQGSQ…LAAVGVAASE (311 aa)) are acyltransferase. Serine 654 acts as the For malonyltransferase activity in catalysis. Residues 910–1037 (HPLLGAHIEM…AKVEQSPREC (128 aa)) are N-terminal hotdog fold. A dehydratase region spans residues 910-1076 (HPLLGAHIEM…QHHGPAFAAL (167 aa)). Positions 910-1198 (HPLLGAHIEM…LRRVERRAVP (289 aa)) constitute a PKS/mFAS DH domain. Histidine 942 functions as the Proton acceptor; for dehydratase activity in the catalytic mechanism. The interval 1050-1198 (GTTVSPADFY…LRRVERRAVP (149 aa)) is C-terminal hotdog fold. Catalysis depends on aspartate 1111, which acts as the Proton donor; for dehydratase activity. Residues 1439-1617 (ASYVVTGGLG…VINWGPWSEV (179 aa)) form a beta-ketoacyl reductase region. NADP(+) is bound at residue 1440 to 1485 (SYVVTGGLGGLGLVVARWLVDRGAGRVVLGGRSDPTDEQCNVLAEL). Positions 1706-1785 (RAVTERMCAR…DLTADLMRQL (80 aa)) constitute a Carrier domain. Serine 1745 bears the O-(pantetheine 4'-phosphoryl)serine mark.

NADP(+) is required as a cofactor. Requires pantetheine 4'-phosphate as cofactor.

The catalysed reaction is icosanoyl-[(phenol)carboxyphthiodiolenone synthase] + 2 (S)-methylmalonyl-CoA + 3 malonyl-CoA + 5 NADPH + 10 H(+) = C32-carboxyphthiodiolenone-[(phenol)carboxyphthiodiolenone synthase] + 5 CO2 + 5 NADP(+) + 5 CoA + 2 H2O. It catalyses the reaction docosanoyl-[(phenol)carboxyphthiodiolenone synthase] + 2 (S)-methylmalonyl-CoA + 3 malonyl-CoA + 5 NADPH + 10 H(+) = C34-carboxyphthiodiolenone-[(phenol)carboxyphthiodiolenone synthase] + 5 CO2 + 5 NADP(+) + 5 CoA + 2 H2O. The enzyme catalyses 17-(4-hydroxyphenyl)heptadecanoyl-[(phenol)carboxyphthiodiolenone synthase] + 2 (S)-methylmalonyl-CoA + 3 malonyl-CoA + 5 NADPH + 10 H(+) = C35-(phenol)carboxyphthiodiolenone-[(phenol)carboxyphthiodiolenone synthase] + 5 CO2 + 5 NADP(+) + 5 CoA + 2 H2O. It carries out the reaction 19-(4-hydroxyphenyl)nonadecanoyl-[(phenol)carboxyphthiodiolenone synthase] + 2 (S)-methylmalonyl-CoA + 3 malonyl-CoA + 5 NADPH + 10 H(+) = C37-(phenol)carboxyphthiodiolenone-[(phenol)carboxyphthiodiolenone synthase] + 5 CO2 + 5 NADP(+) + 5 CoA + 2 H2O. It functions in the pathway lipid metabolism; fatty acid biosynthesis. Part of the PpsABCDE complex involved in the biosynthesis of the lipid core common to phthiocerols and phenolphthiocerols by successive additions of malonyl-CoA or methylmalonyl-CoA extender units. PpsA can accept as substrate the activated forms of either icosanoyl (C20), docosanoyl (C22) or lignoceroyl (C24) groups from FadD26, or a (4-hydroxyphenyl)-C17 or (4-hydroxyphenyl)-C19 fatty acyl from FadD29. PpsA initiates the biosynthesis and extends its substrate using a malonyl-CoA extender unit. The PpsB and PpsC proteins add the second and third malonyl-CoA extender units. PpsD adds an (R)-methylmalonyl unit and PpsE adds a second (R)-methylmalonyl unit. The incorporation of the methylmalonyl units results in formation of two branched methyl groups in the elongated product. The chain is Phenolphthiocerol/phthiocerol polyketide synthase subunit C (ppsD) from Mycobacterium bovis (strain ATCC BAA-935 / AF2122/97).